The chain runs to 538 residues: MSPRKYVIVTGGVLSSVGKGLTTASLALLLSSRGYSVEAIKIDPYINVDAGTMNPYMHGEVFVTEDGGETDLDIGHYERFLGKNLSRKHNITTGQIYFSVISKERSGDYLGQTVQVIPHITDEIKSRIKEVGDVSGADVVIVEIGGTVGDIEGLPFLEAARQMRLEEGFDNTFFIHVALSPYLPTTGEQKTKPVQHSIQELRRIGIQPDAVVVRSHQPLEQEGLRKIALYATLPMENVINSYDIENIYRLPLLLEKQGLARLVERRLFGRETRPDLSRWEEFVALYEKASRRVKVAMVGKYTKLRDSYISIVEALKHASAYEGVRPELLWVESTDIERGVVDVDRVFEEADGAIVLPGFGVRGVEGKIEAIRRFREGKKPMLGICFGMQLSVVEYARNVLGLKEAHTTEVNPETPHPVVDLLPEQRGIDKLGGTMRLGARPVRIVEGTILWSLYGRELASERHRHRYEVNPTYVDRLVEAGLVVSAWSQEGYVEAVELRPRDHPFFLATQFHPEFKSRPLNPAPVFKGFVTAVARLRG.

The amidoligase domain stretch occupies residues 1-269 (MSPRKYVIVT…ARLVERRLFG (269 aa)). Ser-15 is a CTP binding site. Ser-15 is a UTP binding site. Residue 16 to 21 (SVGKGL) coordinates ATP. An L-glutamine-binding site is contributed by Tyr-56. Asp-73 lines the ATP pocket. Mg(2+) is bound by residues Asp-73 and Glu-143. CTP is bound by residues 150–152 (DIE), 190–195 (KTKPVQ), and Lys-226. UTP is bound by residues 190 to 195 (KTKPVQ) and Lys-226. The 245-residue stretch at 294–538 (KVAMVGKYTK…FVTAVARLRG (245 aa)) folds into the Glutamine amidotransferase type-1 domain. Gly-358 lines the L-glutamine pocket. Residue Cys-385 is the Nucleophile; for glutamine hydrolysis of the active site. L-glutamine is bound by residues 386-389 (FGMQ), Glu-409, and Arg-466. Catalysis depends on residues His-512 and Glu-514.

It belongs to the CTP synthase family. Homotetramer.

The enzyme catalyses UTP + L-glutamine + ATP + H2O = CTP + L-glutamate + ADP + phosphate + 2 H(+). It catalyses the reaction L-glutamine + H2O = L-glutamate + NH4(+). The catalysed reaction is UTP + NH4(+) + ATP = CTP + ADP + phosphate + 2 H(+). It participates in pyrimidine metabolism; CTP biosynthesis via de novo pathway; CTP from UDP: step 2/2. Allosterically activated by GTP, when glutamine is the substrate; GTP has no effect on the reaction when ammonia is the substrate. The allosteric effector GTP functions by stabilizing the protein conformation that binds the tetrahedral intermediate(s) formed during glutamine hydrolysis. Inhibited by the product CTP, via allosteric rather than competitive inhibition. Its function is as follows. Catalyzes the ATP-dependent amination of UTP to CTP with either L-glutamine or ammonia as the source of nitrogen. Regulates intracellular CTP levels through interactions with the four ribonucleotide triphosphates. The chain is CTP synthase from Aeropyrum pernix (strain ATCC 700893 / DSM 11879 / JCM 9820 / NBRC 100138 / K1).